An 89-amino-acid chain; its full sequence is Small ribosomal subunit protein bS20 (89 aa).

This sequence belongs to the bacterial ribosomal protein bS20 family.

In terms of biological role, binds directly to 16S ribosomal RNA. The protein is Small ribosomal subunit protein bS20 of Helicobacter acinonychis (strain Sheeba).